The chain runs to 584 residues: NADPH-dependent diflavin oxidoreductase 1 (584 aa).

The Flavodoxin-like domain occupies 6 to 150; that stretch reads IYILYGSETG…VFAYWCNHLY (145 aa). FMN is bound by residues 12–17, 59–62, 97–106, and Glu-132; these read SETGTA, STTG, and CGDTSYTRFN. Residues 199–436 form the FAD-binding FR-type domain; the sequence is RGKIEATLVH…LPGFLNLSYQ (238 aa). FAD is bound by residues Arg-343, 373–376, and 407–410; these read RQYS and GICS. Residues Thr-448, 503–504, and 509–513 each bind NADP(+); these read SR and KKYVQ. FAD is bound at residue Trp-584.

This sequence belongs to the NADPH-dependent diflavin oxidoreductase NDOR1 family. In the N-terminal section; belongs to the flavodoxin family. The protein in the C-terminal section; belongs to the flavoprotein pyridine nucleotide cytochrome reductase family. Interacts with dre2; as part of the cytosolic iron-sulfur (Fe-S) protein assembly (CIA) machinery. The cofactor is FAD. FMN is required as a cofactor.

It localises to the cytoplasm. Its subcellular location is the mitochondrion. It catalyses the reaction 2 oxidized [2Fe-2S]-[protein] + NADPH = 2 reduced [2Fe-2S]-[protein] + NADP(+) + H(+). NADPH-dependent reductase which is a central component of the cytosolic iron-sulfur (Fe-S) protein assembly (CIA) machinery. Transfers electrons from NADPH via its FAD and FMN prosthetic groups to the [2Fe-2S] cluster of dre2, another key component of the CIA machinery. In turn, this reduced cluster provides electrons for assembly of cytosolic iron-sulfur cluster proteins. Positively controls H(2)O(2)-induced cell death. This is NADPH-dependent diflavin oxidoreductase 1 from Schizosaccharomyces pombe (strain 972 / ATCC 24843) (Fission yeast).